Consider the following 268-residue polypeptide: MAKVPDLFEDLKNCYSENEEYGSEIDHLSLNQKSFYDASHEPLHEDCMDKLMSLSTSETSKTSKLTFKESVVMVASNGKILKKRRLSLNQFITDDDLEAIANDTEEEIIKPRSVPYNLQSNVKYNYMRIVNHQCILNDALNRSIIRDPSGQYLMAAVLNNLDNAVKFDMGAYTSEEDSQLPVTLRISKTQLFVSAQNEDEPVLLKEMPETPKIIKDETNLLFFWEKHGSMDYFKSVAHPKLFIATKQEKLVHMASGPPSITDFQILEK.

The propeptide occupies 1-112 (MAKVPDLFED…DTEEEIIKPR (112 aa)). N6-acetyllysine is present on lysine 82. Residues 82 to 86 (KKRRL) form a nuclear localization signal (NLS) region. Serine 87 bears the Phosphoserine mark. N-linked (GlcNAc...) asparagine glycosylation is found at asparagine 102 and asparagine 141.

The protein belongs to the IL-1 family. As to quaternary structure, monomer. Interacts with TMED10; the interaction mediates the translocation from the cytoplasm into the ERGIC (endoplasmic reticulum-Golgi intermediate compartment) and thereby secretion. Interacts with IL1R1. Interacts with S100A13; this interaction is the first step in the export of IL1A, followed by direct translocation of this complex across the plasma membrane. Acetylated within its nuclear localization sequence, which impacts subcellular localization. In terms of processing, proteolytic processed by CAPN1 in a calcium-dependent manner. Cleavage from 31 kDa precursor to 18 kDa biologically active molecules. Post-translationally, phosphorylated. Phosphorylation greatly enhances susceptibility to digestion and promotes the conversion of pre-IL1A alpha to the biologically active IL1A.

The protein localises to the nucleus. The protein resides in the cytoplasm. It localises to the secreted. Functionally, cytokine constitutively present intracellularly in nearly all resting non-hematopoietic cells that plays an important role in inflammation and bridges the innate and adaptive immune systems. After binding to its receptor IL1R1 together with its accessory protein IL1RAP, forms the high affinity interleukin-1 receptor complex. Signaling involves the recruitment of adapter molecules such as MYD88, IRAK1 or IRAK4. In turn, mediates the activation of NF-kappa-B and the three MAPK pathways p38, p42/p44 and JNK pathways. Within the cell, acts as an alarmin and cell death results in its liberation in the extracellular space after disruption of the cell membrane to induce inflammation and alert the host to injury or damage. In addition to its role as a danger signal, which occurs when the cytokine is passively released by cell necrosis, directly senses DNA damage and acts as signal for genotoxic stress without loss of cell integrity. This Lama glama (Llama) protein is Interleukin-1 alpha (IL1A).